Here is a 347-residue protein sequence, read N- to C-terminus: MILISDATLRDGNHAIRHQLSAAQIHAYARAADEAGIDVVEVGHGNGLGGSSCLLGQTPIGDRLMLETARAALRTSRLGVHFIPGLGKAADISLALEIGVDVVRVATHCTEANVSARFIEQTRTAGRTAFGVLMMSHMAPPDTLLAQAKLMERYGAQAVVLMDSAGYSTPSLVRAKVERLVDGLDIDVGFHAHNNLGLAVANSLVALEAGARIVDACVKGFGAGAGNTQLETLVAAMEREGHDTRTTFERVMTLARGTETFLNPKTPHIQPANIASGLYGLFSGYVPHIQKAAQEFGVNEFELYKRLAERKLVAGQEDIIIEEASRLARERDVQRATGGVRVRELSA.

In terms of domain architecture, Pyruvate carboxyltransferase spans 2-252 (ILISDATLRD…DTRTTFERVM (251 aa)). Substrate is bound at residue 10–11 (RD). Residue Asp-11 participates in Mn(2+) binding. Residue His-14 is the Proton acceptor of the active site. Substrate-binding residues include Ser-164 and His-191. 2 residues coordinate Mn(2+): His-191 and His-193.

This sequence belongs to the 4-hydroxy-2-oxovalerate aldolase family.

The catalysed reaction is (S)-4-hydroxy-2-oxopentanoate = acetaldehyde + pyruvate. The sequence is that of 4-hydroxy-2-oxovalerate aldolase from Burkholderia pseudomallei (strain 1106a).